The sequence spans 236 residues: Flagellar L-ring protein (236 aa).

The signal sequence occupies residues 1–24 (MKNKNRLNTIKLLSISLLIAVTTA). Residue Cys-25 is the site of N-palmitoyl cysteine attachment. Cys-25 carries S-diacylglycerol cysteine lipidation.

It belongs to the FlgH family. The basal body constitutes a major portion of the flagellar organelle and consists of four rings (L,P,S, and M) mounted on a central rod.

The protein resides in the cell outer membrane. Its subcellular location is the bacterial flagellum basal body. Assembles around the rod to form the L-ring and probably protects the motor/basal body from shearing forces during rotation. The protein is Flagellar L-ring protein of Colwellia psychrerythraea (strain 34H / ATCC BAA-681) (Vibrio psychroerythus).